The sequence spans 584 residues: High-affinity choline transporter 1 (584 aa).

The Extracellular portion of the chain corresponds to 1–6; that stretch reads MTVHID. A helical transmembrane segment spans residues 7–27; sequence GIVAIVLFYLLILFVGLWAAW. Residues 28 to 50 are Cytoplasmic-facing; it reads KSKNTSMEGAMDRSEAIMIGGRD. The chain crosses the membrane as a helical span at residues 51 to 71; sequence IGLLVGGFTMTATWVGGGYIN. Topologically, residues 72-83 are extracellular; the sequence is GTAEAVYVPGYG. The chain crosses the membrane as a helical span at residues 84–104; sequence LAWAQAPFGYALSLVIGGLFF. Residues 105 to 127 lie on the Cytoplasmic side of the membrane; it reads AKPMRSRGYVTMLDPFQQMYGKR. A helical transmembrane segment spans residues 128-148; sequence MGGLLFIPALLGEIFWSAAIL. Residues 149 to 166 lie on the Extracellular side of the membrane; that stretch reads SALGATLSVIVDININVS. The helical transmembrane segment at 167–187 threads the bilayer; it reads VVVSAVIAVLYTLVGGLYSVA. Residues 188-193 are Cytoplasmic-facing; it reads YTDVVQ. A helical transmembrane segment spans residues 194 to 214; it reads LFCIFLGLWISIPFALLNPAV. Topologically, residues 215 to 239 are extracellular; the sequence is TDIIVTANQEVYQEPWVGNIQSKDS. The helical transmembrane segment at 240–260 threads the bilayer; it reads LIWIDNFLLLMLGGIPWQVYF. Topologically, residues 261–276 are cytoplasmic; the sequence is QRVLSASSATYAQVLS. Residues 277–297 form a helical membrane-spanning segment; that stretch reads FLAAFGCVLMAIPSVLIGAIG. Residues 298 to 319 lie on the Extracellular side of the membrane; the sequence is TSTDWNQTSYGLPGPIGKNETD. A glycan (N-linked (GlcNAc...) asparagine) is linked at Asn303. A helical membrane pass occupies residues 320–340; that stretch reads MILPIVLQHLCPPYISFFGLG. Topologically, residues 341–378 are cytoplasmic; that stretch reads AVSAAVMSSADSSILSASSMFARNIYHLAFRQEASDKE. Residues 379–399 form a helical membrane-spanning segment; that stretch reads IVWVMRITIFLFGGAATSMAL. At 400–408 the chain is on the extracellular side; it reads LAQSIYGLW. A helical transmembrane segment spans residues 409–429; that stretch reads YLSSDLVYVIIFPQLISVLFV. Topologically, residues 430-437 are cytoplasmic; that stretch reads KGTNTYGS. Residues 438–458 form a helical membrane-spanning segment; it reads IAGYIIGFLLRISGGEPYLHM. Residues 459–487 are Extracellular-facing; the sequence is QPFIYYPGCYLDHSFGDDPVYVQRFPFKT. Residues 488-508 form a helical membrane-spanning segment; it reads MAMLFSFLGNTGVSYLVKYLF. Topologically, residues 509–584 are cytoplasmic; the sequence is VSGILPPKLD…NPELSKSGND (76 aa).

This sequence belongs to the sodium:solute symporter (SSF) (TC 2.A.21) family. In terms of processing, phosphorylated. As to expression, specific for cholinergic neurons.

Its subcellular location is the membrane. Imports choline from the extracellular space to the neuron with high affinity. Rate-limiting step in acetylcholine synthesis. Sodium ion and chloride ion dependent. The polypeptide is High-affinity choline transporter 1 (CHT1) (Torpedo marmorata (Marbled electric ray)).